The following is a 631-amino-acid chain: Shootin-1 (631 aa).

M1 is modified (N-acetylmethionine). A phosphoserine mark is found at S3 and S4. Residues 7–353 (EKQLQLITSL…RVNQSENSVP (347 aa)) adopt a coiled-coil conformation. Phosphoserine; by PAK1 is present on S101. S249 is modified (phosphoserine). Residues 343–511 (KRVNQSENSV…SESKSMPVLG (169 aa)) form a disordered region. The span at 352 to 369 (VPPPPPPPPPLPPPPPNP) shows a compositional bias: pro residues. At S375 the chain carries Phosphoserine. Positions 403–418 (TDLKRQAVEEMMDRIK) are enriched in basic and acidic residues. The segment covering 456-465 (LNKSTSSRSL) has biased composition (polar residues). S473 carries the phosphoserine modification. Position 487 is a phosphothreonine (T487). Positions 490–505 (ADSSSPTGILATSESK) are enriched in polar residues. Position 494 is a phosphoserine (S494). Residue T496 is modified to Phosphothreonine. Phosphoserine occurs at positions 506, 515, 532, and 534. Disordered stretches follow at residues 524 to 566 (KTLE…IGCR) and 579 to 631 (VVVL…SSNC). T537 bears the Phosphothreonine mark. Residues 550-561 (CTSSKVTFQPPS) show a composition bias toward polar residues. Basic and acidic residues predominate over residues 590-631 (PQTKDQVAEKDPTQHKEDEGEIQPENKEDSIENVRETDSSNC).

The protein belongs to the shootin family. As to quaternary structure, interacts with L1CAM; this interaction occurs in axonal growth cones. Interacts with actin filament retrograde flow; this interaction is enhanced in a netrin-1- and PAK1-dependent manner and promotes F-actin-substrate coupling and concomitant formation of traction forces at axonal growth cones. Interacts with RUFY3. Interacts with PFN2. Interacts (via N-terminus) with KIF20B; this interaction is direct and promotes the association of SHTN1 to microtubules in primary neurons. Associates with microtubule. In terms of processing, phosphorylated on Ser-101 and Ser-249 by PAK1 through a CDC42- and RAC1-dependent signaling pathway, which enhances its association with F-actin retrograde flow in filopodia and lamellipodia of axonal growth cones. Phosphorylation on Ser-101 and Ser-249 is increased by netrin-1.

It is found in the perikaryon. It localises to the cell projection. The protein localises to the axon. The protein resides in the growth cone. Its subcellular location is the cytoplasm. It is found in the cytoskeleton. It localises to the filopodium. The protein localises to the lamellipodium. Involved in the generation of internal asymmetric signals required for neuronal polarization and neurite outgrowth. Mediates netrin-1-induced F-actin-substrate coupling or 'clutch engagement' within the axon growth cone through activation of CDC42, RAC1 and PAK1-dependent signaling pathway, thereby converting the F-actin retrograde flow into traction forces, concomitantly with filopodium extension and axon outgrowth. Plays a role in cytoskeletal organization by regulating the subcellular localization of phosphoinositide 3-kinase (PI3K) activity at the axonal growth cone. Also plays a role in regenerative neurite outgrowth. In the developing cortex, cooperates with KIF20B to promote both the transition from the multipolar to the bipolar stage and the radial migration of cortical neurons from the ventricular zone toward the superficial layer of the neocortex. Involved in the accumulation of phosphatidylinositol 3,4,5-trisphosphate (PIP3) in the growth cone of primary hippocampal neurons. The polypeptide is Shootin-1 (Homo sapiens (Human)).